A 56-amino-acid chain; its full sequence is Attractin (56 aa).

3 disulfides stabilise this stretch: Cys4–Cys41, Cys13–Cys33, and Cys20–Cys26. Residue Asn25 is glycosylated (N-linked (GlcNAc...) asparagine).

Produced by the albumen gland of the egg cordons.

The protein resides in the secreted. Functionally, water-borne pheromone that attract the marine mollusk Aplysia into breeding aggregations and coordinate male and female reproductive behavior within the aggregation. The chain is Attractin (ATT) from Aplysia depilans (Sea hare).